We begin with the raw amino-acid sequence, 81 residues long: U1-sicaritoxin-Li1c (81 aa).

Residues Ala1–Arg16 constitute a propeptide that is removed on maturation. Disulfide bonds link Cys18-Cys35, Cys26-Cys40, Cys34-Cys53, and Cys42-Cys51. Position 62 is an arginine amide (Arg62). Residues Ala66–Asp81 constitute a propeptide that is removed on maturation.

The protein belongs to the neurotoxin 28 (Litx) family. As to expression, expressed by the venom gland.

Its subcellular location is the secreted. Its function is as follows. Toxin active against insects (S.frugiperda larvae). May act on sodium (Nav) or calcium (Cav) channels. In Loxosceles intermedia (Brown spider), this protein is U1-sicaritoxin-Li1c.